A 694-amino-acid chain; its full sequence is Polyribonucleotide nucleotidyltransferase (694 aa).

Aspartate 485 and aspartate 491 together coordinate Mg(2+). A KH domain is found at 552–611 (PRIETMQIKPNKIATVIGPGGKQIRQIIEEAGVQIDINDSGLVSISASSPQAIEKAKSII). In terms of domain architecture, S1 motif spans 621 to 689 (GKIYEGRVTS…EKGQYKLSHK (69 aa)).

The protein belongs to the polyribonucleotide nucleotidyltransferase family. It depends on Mg(2+) as a cofactor.

The protein localises to the cytoplasm. The catalysed reaction is RNA(n+1) + phosphate = RNA(n) + a ribonucleoside 5'-diphosphate. Functionally, involved in mRNA degradation. Catalyzes the phosphorolysis of single-stranded polyribonucleotides processively in the 3'- to 5'-direction. In Chlamydia felis (strain Fe/C-56) (Chlamydophila felis), this protein is Polyribonucleotide nucleotidyltransferase.